Reading from the N-terminus, the 262-residue chain is MKFFNWMQNKLGGKQENRKSNTSTSTTYAKPEPREEFSDWPHSLLAIGTFGNNNEITQNIENQNTQQEDPSSSEEVPDFTPEEIGKLQKELTRLLRRKPNVEKEISELPLDRFLNCPSSLEVDRRISNALCSESGGDKDEDIEKTLSVILDKCKDICAEKSKKSIGKKSISFLLKKMFVCRSGFAPTPSLRDTLQESRMEKLLRTMLHKKLYTQNNSRAPVLKKCLENKKSIKKRNEDEAEERIDEGSKWVKTDSEYIVLEI.

The tract at residues M1–W40 is disordered. The IGT motif motif lies at S43–T49.

This sequence belongs to the LAZY family.

In terms of biological role, involved in the control of root gravitropism. The polypeptide is Protein NEGATIVE GRAVITROPIC RESPONSE OF ROOTS (Medicago truncatula (Barrel medic)).